Reading from the N-terminus, the 465-residue chain is Putative F-box/FBD/LRR-repeat protein At1g22000 (465 aa).

The 47-residue stretch at 28-74 (ETRICALPDDLLLQILPHVPTKEAVATSILSKQWRYVWLMLPKLEFK) folds into the F-box domain. LRR repeat units lie at residues 154–181 (CLTL…SLHY), 182–207 (VVYK…SVHS), 210–230 (DDNL…NYDE), 248–273 (NEVE…HLSE), and 339–365 (ISLV…TIDN). The FBD domain occupies 373–424 (SWNQPSSIPGCLLSHLETFRWRGYGGREDAKKLLMTYILANSKCLKTVEISL).

This Arabidopsis thaliana (Mouse-ear cress) protein is Putative F-box/FBD/LRR-repeat protein At1g22000.